Reading from the N-terminus, the 394-residue chain is Ribulose bisphosphate carboxylase large chain (394 aa).

Lysine 5 is modified (N6,N6,N6-trimethyllysine). Substrate is bound by residues asparagine 114 and threonine 164. Lysine 166 functions as the Proton acceptor in the catalytic mechanism. Residue lysine 168 participates in substrate binding. Residues lysine 192, aspartate 194, and glutamate 195 each coordinate Mg(2+). Lysine 192 bears the N6-carboxylysine mark. The active-site Proton acceptor is histidine 285. Substrate is bound by residues arginine 286, histidine 318, and serine 370.

It belongs to the RuBisCO large chain family. Type I subfamily. As to quaternary structure, heterohexadecamer of 8 large chains and 8 small chains. Mg(2+) is required as a cofactor.

It localises to the plastid. The protein localises to the chloroplast. It carries out the reaction 2 (2R)-3-phosphoglycerate + 2 H(+) = D-ribulose 1,5-bisphosphate + CO2 + H2O. The enzyme catalyses D-ribulose 1,5-bisphosphate + O2 = 2-phosphoglycolate + (2R)-3-phosphoglycerate + 2 H(+). Functionally, ruBisCO catalyzes two reactions: the carboxylation of D-ribulose 1,5-bisphosphate, the primary event in carbon dioxide fixation, as well as the oxidative fragmentation of the pentose substrate in the photorespiration process. Both reactions occur simultaneously and in competition at the same active site. This chain is Ribulose bisphosphate carboxylase large chain (rbcL), found in Euryale ferox (Gorgon plant).